The following is a 231-amino-acid chain: Uracil-DNA glycosylase (231 aa).

The active-site Proton acceptor is the Asp71.

Belongs to the uracil-DNA glycosylase (UDG) superfamily. UNG family.

It localises to the cytoplasm. The catalysed reaction is Hydrolyzes single-stranded DNA or mismatched double-stranded DNA and polynucleotides, releasing free uracil.. Its function is as follows. Excises uracil residues from the DNA which can arise as a result of misincorporation of dUMP residues by DNA polymerase or due to deamination of cytosine. The polypeptide is Uracil-DNA glycosylase (Pseudomonas aeruginosa (strain ATCC 15692 / DSM 22644 / CIP 104116 / JCM 14847 / LMG 12228 / 1C / PRS 101 / PAO1)).